A 488-amino-acid polypeptide reads, in one-letter code: MKKLTTIFIVFTLALLFVGNSTSANNGSVVEQNGQLSIQNGQLVNEHGDPVQLKGMSSHGLQWYGQFVNYDSIKWLRDDWGITVFRAAMYTSSGGYIEDPSVKEKVKEAVEAAIDLGIYVIIDWHILSDNDPNIYKEEAKEFFDEMSALYGDYPNVIYEIANEPNGHNVRWDSHIKPYAEEVIPVIRANDPNNIVIVGTATWSQDVHEAADNQLDDPNVMYAFHFYAGTHGQQLRNQVDYALSRGAAIFVSEWGTSAATGDGGVFLDEAQVWIDFMDERNLSWANWSLTHKDESSAALMPGANPTGGWTAAELSPSGAFVREKIRESASIPPSDPTPPSDPDPGEPDPTPPSDPGEYPAWDPNQIYTNEIVYHNGQLWQAKWWTQNQEPGANQYGPWEPLGDAPPSEPSDPPPPSEPEPDPGEPDPGEPDPGEPDPTPPSDPGEYPAWDPTQIYTNEIVYHNGQLWQAKWWTQNQEPGYPYGPWEPLN.

Substrate contacts are provided by residues histidine 59, 63–64, tyrosine 90, and histidine 125; that span reads WY. Glutamate 163 (proton donor) is an active-site residue. Residue tyrosine 226 participates in substrate binding. Glutamate 252 acts as the Nucleophile in catalysis. Substrate contacts are provided by residues 258 to 259, tryptophan 286, and 291 to 293; these read AT and KDE. Disordered regions lie at residues 326–362 and 388–451; these read ESAS…AWDP and EPGA…WDPT. Composition is skewed to pro residues over residues 332–353 and 405–416; these read PSDP…PPSD and PSEPSDPPPPSE. Over residues 417-433 the composition is skewed to acidic residues; it reads PEPDPGEPDPGEPDPGE.

Belongs to the glycosyl hydrolase 5 (cellulase A) family.

It catalyses the reaction Endohydrolysis of (1-&gt;4)-beta-D-glucosidic linkages in cellulose, lichenin and cereal beta-D-glucans.. The chain is Endoglucanase A (celA) from Evansella cellulosilytica (strain ATCC 21833 / DSM 2522 / FERM P-1141 / JCM 9156 / N-4) (Bacillus cellulosilyticus).